The chain runs to 143 residues: Ribosomal RNA large subunit methyltransferase H (143 aa).

S-adenosyl-L-methionine contacts are provided by residues Gly-95 and 111-116 (FSDLTF).

It belongs to the RNA methyltransferase RlmH family. Homodimer.

The protein resides in the cytoplasm. The catalysed reaction is pseudouridine(1915) in 23S rRNA + S-adenosyl-L-methionine = N(3)-methylpseudouridine(1915) in 23S rRNA + S-adenosyl-L-homocysteine + H(+). Functionally, specifically methylates the pseudouridine at position 1915 (m3Psi1915) in 23S rRNA. The protein is Ribosomal RNA large subunit methyltransferase H of Metamycoplasma arthritidis (strain 158L3-1) (Mycoplasma arthritidis).